Consider the following 288-residue polypeptide: Phosphatidylserine decarboxylase proenzyme (288 aa).

Catalysis depends on charge relay system; for autoendoproteolytic cleavage activity residues Asp-90, His-147, and Ser-252. The active-site Schiff-base intermediate with substrate; via pyruvic acid; for decarboxylase activity is the Ser-252. Ser-252 carries the pyruvic acid (Ser); by autocatalysis modification.

This sequence belongs to the phosphatidylserine decarboxylase family. PSD-B subfamily. Prokaryotic type I sub-subfamily. Heterodimer of a large membrane-associated beta subunit and a small pyruvoyl-containing alpha subunit. Requires pyruvate as cofactor. Is synthesized initially as an inactive proenzyme. Formation of the active enzyme involves a self-maturation process in which the active site pyruvoyl group is generated from an internal serine residue via an autocatalytic post-translational modification. Two non-identical subunits are generated from the proenzyme in this reaction, and the pyruvate is formed at the N-terminus of the alpha chain, which is derived from the carboxyl end of the proenzyme. The autoendoproteolytic cleavage occurs by a canonical serine protease mechanism, in which the side chain hydroxyl group of the serine supplies its oxygen atom to form the C-terminus of the beta chain, while the remainder of the serine residue undergoes an oxidative deamination to produce ammonia and the pyruvoyl prosthetic group on the alpha chain. During this reaction, the Ser that is part of the protease active site of the proenzyme becomes the pyruvoyl prosthetic group, which constitutes an essential element of the active site of the mature decarboxylase.

It localises to the cell membrane. It catalyses the reaction a 1,2-diacyl-sn-glycero-3-phospho-L-serine + H(+) = a 1,2-diacyl-sn-glycero-3-phosphoethanolamine + CO2. Its pathway is phospholipid metabolism; phosphatidylethanolamine biosynthesis; phosphatidylethanolamine from CDP-diacylglycerol: step 2/2. Functionally, catalyzes the formation of phosphatidylethanolamine (PtdEtn) from phosphatidylserine (PtdSer). This chain is Phosphatidylserine decarboxylase proenzyme, found in Pseudomonas fluorescens (strain ATCC BAA-477 / NRRL B-23932 / Pf-5).